The following is a 383-amino-acid chain: Protein salvador homolog 1 (383 aa).

Ser-94 and Ser-136 each carry phosphoserine. WW domains lie at 199-232 and 234-267; these read LPLP…HPLE and EGLP…HPCA. The residue at position 210 (Thr-210) is a Phosphothreonine. The region spanning 321 to 368 is the SARAH domain; that stretch reads ILKWELFQLADLDTYQGMLKLLFMKELEQIVKMYEAYRQALLTELENR. The stretch at 344 to 373 forms a coiled coil; sequence MKELEQIVKMYEAYRQALLTELENRKQRQQ.

In terms of assembly, homodimer. Stabilized through interaction with STK3/MST2 or STK4/MST1. Interacts (via SARAH domain) with isoform 1 of NEK2. Interacts with ESR1 only in the presence of STK3/MST2. Interacts with WTIP and AJUBA. Phosphorylated by STK3/MST2 and STK4/MST1. Phosphorylation is not required for SAV1 stability and may increase the number of protein binding sites on the scaffold molecule. Ubiquitously expressed in adult tissues with highest expression in the pancreas, aorta and interventricular septum and lowest expression in skeletal muscle. Expression was higher in fetal than in the adult heart. Expressed in various cell lines.

It localises to the nucleus. Its subcellular location is the cytoplasm. In terms of biological role, regulator of STK3/MST2 and STK4/MST1 in the Hippo signaling pathway which plays a pivotal role in organ size control and tumor suppression by restricting proliferation and promoting apoptosis. The core of this pathway is composed of a kinase cascade wherein STK3/MST2 and STK4/MST1, in complex with its regulatory protein SAV1, phosphorylates and activates LATS1/2 in complex with its regulatory protein MOB1, which in turn phosphorylates and inactivates YAP1 oncoprotein and WWTR1/TAZ. Phosphorylation of YAP1 by LATS1/2 inhibits its translocation into the nucleus to regulate cellular genes important for cell proliferation, cell death, and cell migration. SAV1 is required for STK3/MST2 and STK4/MST1 activation and promotes cell-cycle exit and terminal differentiation in developing epithelial tissues. Plays a role in centrosome disjunction by regulating the localization of NEK2 to centrosomes, and its ability to phosphorylate CROCC and CEP250. In conjunction with STK3/MST2, activates the transcriptional activity of ESR1 through the modulation of its phosphorylation. The sequence is that of Protein salvador homolog 1 from Homo sapiens (Human).